The sequence spans 396 residues: Protein NDRG1-A (396 aa).

The disordered stretch occupies residues 326–396 (RSRTGSAASS…NSPKSMEVSC (71 aa)). The segment covering 327–340 (SRTGSAASSSSQDG) has biased composition (low complexity). Tandem repeats lie at residues 340 to 349 (GNRSRSHTNE), 350 to 359 (GSRSRSHTGD), 360 to 369 (GNRSRAHTGD), and 370 to 379 (GNRSRSHTDT). The tract at residues 340 to 379 (GNRSRSHTNEGSRSRSHTGDGNRSRAHTGDGNRSRSHTDT) is 4 X 10 AA tandem repeats of G-[NS]-R-S-R-[AS]-H-T-[DGN]-[DET]. Basic and acidic residues predominate over residues 346–377 (HTNEGSRSRSHTGDGNRSRAHTGDGNRSRSHT). The span at 378 to 390 (DTNNINSDQNSPK) shows a compositional bias: polar residues.

The protein belongs to the NDRG family.

May be involved in pronephros development, after specification of the pronephros. In Xenopus laevis (African clawed frog), this protein is Protein NDRG1-A (ndrg1-a).